The chain runs to 291 residues: Ribosomal RNA small subunit methyltransferase A (291 aa).

The S-adenosyl-L-methionine site is built by H37, L39, G64, E85, D110, and N131.

Belongs to the class I-like SAM-binding methyltransferase superfamily. rRNA adenine N(6)-methyltransferase family. RsmA subfamily.

The protein localises to the cytoplasm. The catalysed reaction is adenosine(1518)/adenosine(1519) in 16S rRNA + 4 S-adenosyl-L-methionine = N(6)-dimethyladenosine(1518)/N(6)-dimethyladenosine(1519) in 16S rRNA + 4 S-adenosyl-L-homocysteine + 4 H(+). Its function is as follows. Specifically dimethylates two adjacent adenosines (A1518 and A1519) in the loop of a conserved hairpin near the 3'-end of 16S rRNA in the 30S particle. May play a critical role in biogenesis of 30S subunits. This Dehalococcoides mccartyi (strain ATCC BAA-2100 / JCM 16839 / KCTC 5957 / BAV1) protein is Ribosomal RNA small subunit methyltransferase A.